Reading from the N-terminus, the 526-residue chain is UDP-glycosyltransferase UGT5 (526 aa).

Topologically, residues 1-474 (MIFFYFLTLT…TAAVDMPWYQ (474 aa)) are lumenal. N-linked (GlcNAc...) asparagine glycans are attached at residues Asn49, Asn124, and Asn283. Residues 475-495 (YLLLDVIAFLIFILVSVILII) traverse the membrane as a helical segment. Residues 496–526 (YYGVKISLRYLCALIFGNSSSLKPTKKVKDN) are Cytoplasmic-facing.

It belongs to the UDP-glycosyltransferase family.

The protein localises to the microsome membrane. Its function is as follows. Catalyzes the transfer of a glycosyl group from a UDP-sugar to an acceptor molecule. The protein is UDP-glycosyltransferase UGT5 of Dactylopius coccus (Cochineal).